The chain runs to 231 residues: NADH-ubiquinone oxidoreductase chain 4 (231 aa).

7 consecutive transmembrane segments (helical) span residues Pro1 to Ile21, Met34 to Leu54, Leu62 to Thr82, Leu86 to Leu106, Ile118 to Leu138, Thr169 to Leu189, and Leu211 to Met231.

This sequence belongs to the complex I subunit 4 family.

Its subcellular location is the mitochondrion membrane. It carries out the reaction a ubiquinone + NADH + 5 H(+)(in) = a ubiquinol + NAD(+) + 4 H(+)(out). In terms of biological role, core subunit of the mitochondrial membrane respiratory chain NADH dehydrogenase (Complex I) that is believed to belong to the minimal assembly required for catalysis. Complex I functions in the transfer of electrons from NADH to the respiratory chain. The immediate electron acceptor for the enzyme is believed to be ubiquinone. The chain is NADH-ubiquinone oxidoreductase chain 4 (MT-ND4) from Causus rhombeatus (Rhombic night adder).